The sequence spans 510 residues: Probable cytochrome P450 4aa1 (510 aa).

C450 is a binding site for heme.

Belongs to the cytochrome P450 family. Heme is required as a cofactor.

It is found in the endoplasmic reticulum membrane. The protein resides in the microsome membrane. In terms of biological role, may be involved in the metabolism of insect hormones and in the breakdown of synthetic insecticides. The sequence is that of Probable cytochrome P450 4aa1 (Cyp4aa1) from Drosophila melanogaster (Fruit fly).